Consider the following 266-residue polypeptide: Outer kinetochore KNL1 complex subunit ZWINT (266 aa).

A disordered region spans residues 95-115 (DQNPDALASEDTSRQKATETK). Residues 105-115 (DTSRQKATETK) show a composition bias toward basic and acidic residues. Residues 136 to 237 (LSEALPQVKE…QRNQSYLQLL (102 aa)) adopt a coiled-coil conformation. Ser232 and Ser265 each carry phosphoserine.

As to quaternary structure, component of the KNL1 complex composed of KNL1 and ZWINT. Part of the ten-subunit outer kinetochore KMN network that includes the KNL1, MIS12 and NDC80 complexes; a bioriented kinetochore contains approximately 150 copies of the network. Interacts with the MIS12 complex subunits MIS12 DSN1, and PMF1. Interacts with the NDC80 complex subunit NDC80 during mitosis. Interacts with ZW10. Interacts with CETN3. As to expression, expressed abundantly in brain and at lower levels in testis and kidney.

It is found in the nucleus. Its subcellular location is the chromosome. The protein resides in the centromere. The protein localises to the kinetochore. Its function is as follows. Acts as a component of the outer kinetochore KNL1 complex that serves as a docking point for spindle assembly checkpoint components and mediates microtubule-kinetochore interactions. Kinetochores, consisting of a centromere-associated inner segment and a microtubule-contacting outer segment, play a crucial role in chromosome segregation by mediating the physical connection between centromeric DNA and spindle microtubules. The outer kinetochore is made up of the ten-subunit KMN network, comprising the MIS12, NDC80 and KNL1 complexes, and auxiliary microtubule-associated components; together they connect the outer kinetochore with the inner kinetochore, bind microtubules, and mediate interactions with mitotic checkpoint proteins that delay anaphase until chromosomes are bioriented on the spindle. Targets the RZZ complex to the kinetochore at prometaphase. Recruits MAD2L1 to the kinetochore, but is not required for BUB1B localization. In addition to orienting mitotic chromosomes, it is also essential for alignment of homologous chromosomes during meiotic metaphase I. In meiosis I, required to activate the spindle assembly checkpoint at unattached kinetochores to correct erroneous kinetochore-microtubule attachments. The protein is Outer kinetochore KNL1 complex subunit ZWINT (Zwint) of Rattus norvegicus (Rat).